The chain runs to 338 residues: 4-hydroxythreonine-4-phosphate dehydrogenase (338 aa).

H136 and T137 together coordinate substrate. H173, H218, and H273 together coordinate a divalent metal cation. Substrate-binding residues include K281, N290, and R299.

This sequence belongs to the PdxA family. In terms of assembly, homodimer. It depends on Zn(2+) as a cofactor. Requires Mg(2+) as cofactor. Co(2+) serves as cofactor.

Its subcellular location is the cytoplasm. The catalysed reaction is 4-(phosphooxy)-L-threonine + NAD(+) = 3-amino-2-oxopropyl phosphate + CO2 + NADH. It participates in cofactor biosynthesis; pyridoxine 5'-phosphate biosynthesis; pyridoxine 5'-phosphate from D-erythrose 4-phosphate: step 4/5. Functionally, catalyzes the NAD(P)-dependent oxidation of 4-(phosphooxy)-L-threonine (HTP) into 2-amino-3-oxo-4-(phosphooxy)butyric acid which spontaneously decarboxylates to form 3-amino-2-oxopropyl phosphate (AHAP). In Ralstonia nicotianae (strain ATCC BAA-1114 / GMI1000) (Ralstonia solanacearum), this protein is 4-hydroxythreonine-4-phosphate dehydrogenase.